The primary structure comprises 1340 residues: Thioester-containing protein 1 allele S1 (1340 aa).

Positions 1 to 21 are cleaved as a signal peptide; it reads MWQFIRSRILTVIIFIGAAHG. Asn68, Asn199, Asn242, Asn312, and Asn481 each carry an N-linked (GlcNAc...) asparagine glycan. The segment at 580 to 609 is may contain the cleavage site; the sequence is ENEFDIFHSLGLFARTLDDILFDSANEKTG. 4 N-linked (GlcNAc...) asparagine glycosylation sites follow: Asn637, Asn728, Asn813, and Asn828. A cross-link (isoglutamyl cysteine thioester (Cys-Gln)) is located at residues 859–862; it reads CGEQ. Cystine bridges form between Cys1217–Cys1283, Cys1326–Cys1338, and Cys1329–Cys1334.

Heterodimer of a TEP1-N chain and an TEP1-C chain non-covalently linked. Forms a complex composed of TEP1-N and TEP1-C heterodimer, LRIM1 and APL1C; the interaction stabilizes TEP1-N and TEP1-C heterodimer, prevents its binding to tissues while circulating in the hemolymph and protects the thioester bond from hydrolysis. Mature TEP1 and to a lesser extent full-length TEP1 interact with SPCLIP1; the interaction is induced by microbial infection. Post-translationally, in the hemolymph, the full-length protein is cleaved by an unknow protease into a 75kDa N-terminal (TEP1-N) chain and an 80kDa C-terminal (TEP1-C) chain which remain non-covalently linked. The TEP1-C chain contains the thioester bond which covalently binds to the pathogen surface. Cleavage is induced by bacterial infection or aseptic wound injury. During embryonic and pupal development, the cleaved form is the predominant form. In terms of processing, N-glycosylated. Specifically expressed in hemocytes (at protein level).

It is found in the secreted. Plays an essential role in the innate immune response to bacteria and protozoa infection. After proteolytic cleavage, the protein C-terminus binds covalently through a thioester bond to the pathogen surface resulting in pathogen clearance either by melanization or lysis. Initiate the recruitment and activation of a cascade of proteases, mostly of CLIP-domain serine proteases, which leads to the proteolytic cleavage of the prophenoloxidase (PPO) into active phenoloxidase (PO), the rate-limiting enzyme in melanin biosynthesis. In response to parasite P.berghei-mediated infection, binds to and mediates killing of ookinetes, as they egress from midgut epithelial cells into the basal labyrinth, by both lysis and melanization. During bacterial infection, binds to both Gram-positive and Gram-negative bacteria but only promotes phagocytosis of Gram-negative bacteria. Promotes the accumulation of SPCLIP1 onto the surface of P.berghei ookinetes and bacterium E.coli which leads to the melanization of the pathogen. Recruits CLIPA2 to bacteria surface. In response to bacterial infection, required for periostial hemocyte aggregation, but not for the aggregation of sessile hemocytes in non-periostial regions. During the late stage of fungus B.bassiana-mediated infection, required for the initiation of hyphae melanization by binding to the surface of hyphae and recruiting prophenoloxidase PPO to them. Plays a role in male fertility by binding to defective sperm cells and promoting their removal during spermatogenesis. Its function is as follows. Binds covalently through a thioester bond to the pathogen surface resulting in pathogen clearance. This Anopheles gambiae (African malaria mosquito) protein is Thioester-containing protein 1 allele S1.